Here is a 246-residue protein sequence, read N- to C-terminus: Large ribosomal subunit protein uL30-like 1 (246 aa).

S54 is subject to Phosphoserine.

It belongs to the universal ribosomal protein uL30 family.

The polypeptide is Large ribosomal subunit protein uL30-like 1 (RPL7L1) (Pongo abelii (Sumatran orangutan)).